Here is a 296-residue protein sequence, read N- to C-terminus: 5'-3' exonuclease (296 aa).

The region spanning 175 to 262 (VMPKALIDIK…VPLACTLKDA (88 aa)) is the 5'-3' exonuclease domain.

Functionally, 5'-3' exonuclease acting preferentially on double-stranded DNA. In Bacillus subtilis (strain 168), this protein is 5'-3' exonuclease (ypcP).